We begin with the raw amino-acid sequence, 589 residues long: Coronatine-insensitive protein homolog 2 (589 aa).

The F-box domain occupies Ile18 to Val59. Jasmonate-binding residues include Arg87, Arg352, Arg414, and Arg501.

In terms of assembly, interacts with TIFY9/JAZ5, TIFY11C/JAZ11 and TIFY11D/JAZ12 in a coronatine-dependent manner.

Functionally, involved in jasmonate (JA) signaling. Required for jasmonate signaling in plant defense responses. Component of SCF(COI1) E3 ubiquitin ligase complexes, which may mediate the ubiquitination and subsequent proteasomal degradation of target proteins, including TIFY/JAZ family. The sequence is that of Coronatine-insensitive protein homolog 2 from Oryza sativa subsp. indica (Rice).